The following is a 424-amino-acid chain: Protein ImpB (424 aa).

Residues 2–189 (FALADINSFY…QPVGEVWGVG (188 aa)) enclose the UmuC domain.

This sequence belongs to the DNA polymerase type-Y family.

Its function is as follows. Involved in UV protection and mutation. This chain is Protein ImpB (impB), found in Salmonella typhimurium.